Consider the following 109-residue polypeptide: Biphenyl dioxygenase ferredoxin subunit (109 aa).

The region spanning 4-100 (TKACSVDEVP…IRIEGRDVLV (97 aa)) is the Rieske domain. C43, H45, C63, and H66 together coordinate [2Fe-2S] cluster.

The protein belongs to the bacterial ring-hydroxylating dioxygenase ferredoxin component family. As to quaternary structure, this dioxygenase system consists of four proteins: the two subunits of the hydroxylase component (BphA1 and BphA2), a ferredoxin (BphA3) and a ferredoxin reductase (BphA4).

Functionally, this protein seems to be a 2Fe-2S ferredoxin. The polypeptide is Biphenyl dioxygenase ferredoxin subunit (bphA3) (Pseudomonas sp. (strain KKS102)).